The sequence spans 284 residues: 4-diphosphocytidyl-2-C-methyl-D-erythritol kinase (284 aa).

Lysine 14 is an active-site residue. 98–108 (PMGGGLGGGSS) is a binding site for ATP. The active site involves aspartate 140.

It belongs to the GHMP kinase family. IspE subfamily.

It carries out the reaction 4-CDP-2-C-methyl-D-erythritol + ATP = 4-CDP-2-C-methyl-D-erythritol 2-phosphate + ADP + H(+). It functions in the pathway isoprenoid biosynthesis; isopentenyl diphosphate biosynthesis via DXP pathway; isopentenyl diphosphate from 1-deoxy-D-xylulose 5-phosphate: step 3/6. Catalyzes the phosphorylation of the position 2 hydroxy group of 4-diphosphocytidyl-2C-methyl-D-erythritol. The chain is 4-diphosphocytidyl-2-C-methyl-D-erythritol kinase from Shewanella baltica (strain OS223).